A 559-amino-acid polypeptide reads, in one-letter code: Urocanate hydratase (559 aa).

NAD(+) contacts are provided by residues 53 to 54, Gln131, 177 to 179, Glu197, Arg202, 243 to 244, 264 to 268, 274 to 275, and Tyr323; these read GG, GMG, NA, QTSAH, and YL. Cys411 is a catalytic residue. Residue Gly493 coordinates NAD(+).

The protein belongs to the urocanase family. NAD(+) serves as cofactor.

The protein resides in the cytoplasm. It catalyses the reaction 4-imidazolone-5-propanoate = trans-urocanate + H2O. It participates in amino-acid degradation; L-histidine degradation into L-glutamate; N-formimidoyl-L-glutamate from L-histidine: step 2/3. Functionally, catalyzes the conversion of urocanate to 4-imidazolone-5-propionate. The sequence is that of Urocanate hydratase from Pseudomonas aeruginosa (strain ATCC 15692 / DSM 22644 / CIP 104116 / JCM 14847 / LMG 12228 / 1C / PRS 101 / PAO1).